We begin with the raw amino-acid sequence, 370 residues long: Anthranilate phosphoribosyltransferase (370 aa).

Residues glycine 82, 85-86 (GD), threonine 90, 92-95 (NVST), 110-118 (KHGNRAATS), and serine 122 contribute to the 5-phospho-alpha-D-ribose 1-diphosphate site. Residue glycine 82 participates in anthranilate binding. Mg(2+) is bound at residue serine 94. Asparagine 113 is a binding site for anthranilate. Arginine 168 lines the anthranilate pocket. Aspartate 226 and glutamate 227 together coordinate Mg(2+).

This sequence belongs to the anthranilate phosphoribosyltransferase family. Homodimer. Requires Mg(2+) as cofactor.

The enzyme catalyses N-(5-phospho-beta-D-ribosyl)anthranilate + diphosphate = 5-phospho-alpha-D-ribose 1-diphosphate + anthranilate. The protein operates within amino-acid biosynthesis; L-tryptophan biosynthesis; L-tryptophan from chorismate: step 2/5. Functionally, catalyzes the transfer of the phosphoribosyl group of 5-phosphorylribose-1-pyrophosphate (PRPP) to anthranilate to yield N-(5'-phosphoribosyl)-anthranilate (PRA). This Methanosarcina mazei (strain ATCC BAA-159 / DSM 3647 / Goe1 / Go1 / JCM 11833 / OCM 88) (Methanosarcina frisia) protein is Anthranilate phosphoribosyltransferase.